Here is a 373-residue protein sequence, read N- to C-terminus: NK1 transcription factor-related protein 1 (373 aa).

Disordered regions lie at residues 49–74 (ALPAESRETSPRHEPVPAGAPPTVHR), 149–231 (SDFT…RRAR), and 281–328 (KWKK…SMHT). A compositionally biased stretch (basic and acidic residues) spans 53–63 (ESRETSPRHEP). The segment covering 168–177 (EESSALTGNN) has biased composition (polar residues). A compositionally biased stretch (low complexity) spans 196–210 (GQQTQQSSSNGQNHQ). Positions 227–286 (PRRARTAFTYEQLVALENKFKSTRYLSVCERLNLALSLSLTETQVKIWFQNRRTKWKKQN) form a DNA-binding region, homeobox. Over residues 296–310 (SGGGGGNGPSNGLGG) the composition is skewed to gly residues.

Belongs to the NK-1 homeobox family.

The protein localises to the nucleus. Functionally, may participate in the energy homeostasis regulation. This chain is NK1 transcription factor-related protein 1, found in Danio rerio (Zebrafish).